Reading from the N-terminus, the 184-residue chain is NADH-quinone oxidoreductase subunit B (184 aa).

Residues C37, C38, C103, and C132 each coordinate [4Fe-4S] cluster.

This sequence belongs to the complex I 20 kDa subunit family. As to quaternary structure, NDH-1 is composed of 14 different subunits. Subunits NuoB, C, D, E, F, and G constitute the peripheral sector of the complex. [4Fe-4S] cluster is required as a cofactor.

Its subcellular location is the cell membrane. It catalyses the reaction a quinone + NADH + 5 H(+)(in) = a quinol + NAD(+) + 4 H(+)(out). Functionally, NDH-1 shuttles electrons from NADH, via FMN and iron-sulfur (Fe-S) centers, to quinones in the respiratory chain. The immediate electron acceptor for the enzyme in this species is believed to be a menaquinone. Couples the redox reaction to proton translocation (for every two electrons transferred, four hydrogen ions are translocated across the cytoplasmic membrane), and thus conserves the redox energy in a proton gradient. This is NADH-quinone oxidoreductase subunit B from Mycolicibacterium vanbaalenii (strain DSM 7251 / JCM 13017 / BCRC 16820 / KCTC 9966 / NRRL B-24157 / PYR-1) (Mycobacterium vanbaalenii).